Reading from the N-terminus, the 291-residue chain is Meiosis-specific protein SPO13 (291 aa).

3 disordered regions span residues 1–30, 116–143, and 271–291; these read MAPRKRFRLLELGSPTHSKRKVQKPLQEKT, SFDNSLRFEDIEQPPKSTSTPVLSQSSQ, and CSDYESSGQNATYNDSESSLN. A Nuclear localization signal motif is present at residues 3 to 6; the sequence is PRKR. A compositionally biased stretch (basic and acidic residues) spans 116 to 125; sequence SFDNSLRFED. The segment covering 130 to 143 has biased composition (polar residues); it reads PKSTSTPVLSQSSQ.

Its subcellular location is the nucleus. Its function is as follows. Required for meiosis I segmentation. Probably acts as a regulator of kinetochore function during meiosis I: required both for mono-orientation of kinetochores on sister chromosomes and protection of centromeric cohesin from separase-mediated cleavage. In Saccharomyces cerevisiae (strain ATCC 204508 / S288c) (Baker's yeast), this protein is Meiosis-specific protein SPO13 (SPO13).